The chain runs to 858 residues: Ubiquitin carboxyl-terminal hydrolase 5 (858 aa).

At Ala2 the chain carries N-acetylalanine. The tract at residues 74–96 (RRTRRPKEEDPATGTGDPPRKKP) is disordered. Lys113 participates in a covalent cross-link: Glycyl lysine isopeptide (Lys-Gly) (interchain with G-Cter in SUMO). Phosphoserine occurs at positions 149 and 156. A UBP-type; degenerate zinc finger spans residues 175–283 (QVSKHAFSLK…EHLSHFGIDM (109 aa)). A disulfide bridge links Cys195 with Cys816. 2 residues coordinate Zn(2+): Cys199 and Cys202. Trp209 provides a ligand contact to substrate. Cys219 serves as a coordination point for Zn(2+). 221 to 224 (RRYF) contacts substrate. Residue His232 participates in Zn(2+) binding. Substrate contacts are provided by Tyr259, Tyr261, and Asp264. Position 292 is a phosphothreonine (Thr292). The USP domain maps to 326–856 (TGIRNLGNSC…LGYIYFYQRV (531 aa)). Residue Cys335 is the Nucleophile of the active site. Thr623 carries the post-translational modification Phosphothreonine. UBA domains are found at residues 654-695 (MLDE…VMSH) and 722-762 (PPPE…IFSH). 3 positions are modified to phosphoserine: Ser779, Ser783, and Ser785. His818 (proton acceptor) is an active-site residue.

Belongs to the peptidase C19 family. As to quaternary structure, homodimer. Interacts with TRIML1. Ubiquitinated by SMURF1; leading to proteasomal degradation. Post-translationally, SUMOylated at Lys-113; SUMOylation affects the interaction with Cav3.2 channels.

Its subcellular location is the cytoplasm. The protein resides in the stress granule. The protein localises to the nucleus. It carries out the reaction Thiol-dependent hydrolysis of ester, thioester, amide, peptide and isopeptide bonds formed by the C-terminal Gly of ubiquitin (a 76-residue protein attached to proteins as an intracellular targeting signal).. Its function is as follows. Deubiquitinating enzyme that participates in a wide range of cellular processes by specifically cleaving isopeptide bonds between ubiquitin and substrate proteins or ubiquitin itself. Affects thereby important cellular signaling pathways such as NF-kappa-B, Wnt/beta-catenin, and cytokine production by regulating ubiquitin-dependent protein degradation. Participates in the activation of the Wnt signaling pathway by promoting FOXM1 deubiquitination and stabilization that induces the recruitment of beta-catenin to Wnt target gene promoter. Regulates the assembly and disassembly of heat-induced stress granules by mediating the hydrolysis of unanchored ubiquitin chains. Promotes lipopolysaccharide-induced apoptosis and inflammatory response by stabilizing the TXNIP protein. Affects T-cell biology by stabilizing the inhibitory receptor on T-cells PDC1. Acts as a negative regulator of autophagy by regulating ULK1 at both protein and mRNA levels. Acts also as a negative regulator of type I interferon production by simultaneously removing both 'Lys-48'-linked unanchored and 'Lys-63'-linked anchored polyubiquitin chains on the transcription factor IRF3. Modulates the stability of DNA mismatch repair protein MLH1 and counteracts the effect of the ubiquitin ligase UBR4. Upon activation by insulin, it gets phosphorylated through mTORC1-mediated phosphorylation to enhance YTHDF1 stability by removing 'Lys-11'-linked polyubiquitination. May also deubiquitinate other substrates such as the calcium channel CACNA1H. This Homo sapiens (Human) protein is Ubiquitin carboxyl-terminal hydrolase 5 (USP5).